Here is a 623-residue protein sequence, read N- to C-terminus: Transketolase (623 aa).

Position 1 is an N-acetylmethionine (Met-1). Ser-3 is modified (phosphoserine). 2 positions are modified to N6-acetyllysine: Lys-6 and Lys-11. His-37 serves as a coordination point for substrate. Thiamine diphosphate contacts are provided by Ser-40 and His-77. At Ser-104 the chain carries Phosphoserine. 123 to 125 (GSL) serves as a coordination point for thiamine diphosphate. Position 144 is an N6-acetyllysine (Lys-144). Asp-155 is a binding site for Mg(2+). Gly-156 and Asn-185 together coordinate thiamine diphosphate. Mg(2+) contacts are provided by Asn-185 and Leu-187. 3 positions are modified to N6-acetyllysine: Lys-204, Lys-232, and Lys-241. Residues Lys-244 and His-258 each contribute to the thiamine diphosphate site. His-258 provides a ligand contact to substrate. Lys-260 is subject to N6-acetyllysine. Phosphotyrosine is present on Tyr-275. Phosphothreonine is present on Thr-287. Position 295 is a phosphoserine (Ser-295). Substrate contacts are provided by Arg-318 and Ser-345. A Phosphoserine modification is found at Ser-345. Lys-352 is covalently cross-linked (Glycyl lysine isopeptide (Lys-Gly) (interchain with G-Cter in SUMO2)). The Proton donor role is filled by Glu-366. Phe-392 is a thiamine diphosphate binding site. Substrate contacts are provided by His-416 and Asp-424. Gln-428 contributes to the thiamine diphosphate binding site. Arg-474 contacts substrate. An N6-acetyllysine mark is found at Lys-538 and Lys-603.

The protein belongs to the transketolase family. Homodimer. Mg(2+) serves as cofactor. The cofactor is Ca(2+). Mn(2+) is required as a cofactor. Requires Co(2+) as cofactor. It depends on thiamine diphosphate as a cofactor.

It carries out the reaction D-sedoheptulose 7-phosphate + D-glyceraldehyde 3-phosphate = aldehydo-D-ribose 5-phosphate + D-xylulose 5-phosphate. Catalyzes the transfer of a two-carbon ketol group from a ketose donor to an aldose acceptor, via a covalent intermediate with the cofactor thiamine pyrophosphate. The polypeptide is Transketolase (TKT) (Homo sapiens (Human)).